A 163-amino-acid chain; its full sequence is 18 kDa protein (163 aa).

In Mus musculus (Mouse), this protein is 18 kDa protein.